Reading from the N-terminus, the 463-residue chain is Nitrogenase iron-molybdenum cofactor biosynthesis protein NifE (463 aa).

The protein belongs to the NifD/NifK/NifE/NifN family.

The protein operates within cofactor biosynthesis; Fe-Mo cofactor biosynthesis. In terms of biological role, this protein may play a role in the biosynthesis of the prosthetic group of nitrogenase (FeMo cofactor). The protein is Nitrogenase iron-molybdenum cofactor biosynthesis protein NifE (nifE2) of Methanosarcina barkeri.